A 538-amino-acid chain; its full sequence is MSTETHDEPSGVAHTPASGLRGRPWPTLLAVAVGVMMVALDSTIVAIANPAIQQDLHASLADVQWITNGYLLALAVSLITAGKLGDRFGHRQTFLVGVAGFAVTSAAIGLSGSVAAIVVFRVLQGLFGALMQPSALGLLRVTFPPGKLNMAIGIWSGVVGASTAAGPIIGGLLVQHVGWEAVFFINVPVGLAALVAGLVILTDARAERAPKSFDVSGIVLLSGAMFCLVWGLIKAPAWGWGDLRTLGFLAAAVLAFAGFTLRESRATEPLMPLAMFRSVPLSAGTVLMVLMAFSFIGGLFFVTFYLQNVHGMSPVESGVHLLPLTGMMIVGAPVSGIVISRFGPGGPLVVGMLLTAASLWGMSTLEADSGMGITSLWFVLLGLGLAPVMVGTTDVIVSNAPAELAGVAGGLQQSAMQVGGSLGTAVLGVLMASRVGDVFPDKWAEANLPRVGPREAAAIEDAAEVGAVPPAGTLPGRHAGTLSEVVHSSFISGMGLAFTVAGAVALVAAAVALFTRKAEPDERAPEEFPVPASTAGRG.

14 helical membrane passes run 28-48, 65-85, 100-120, 126-146, 154-174, 181-201, 213-233, 239-259, 286-306, 319-339, 342-362, 371-391, 413-433, and 494-514; these read LLAVAVGVMMVALDSTIVAIA, WITNGYLLALAVSLITAGKLG, GFAVTSAAIGLSGSVAAIVVF, LFGALMQPSALGLLRVTFPPG, IWSGVVGASTAAGPIIGGLLV, AVFFINVPVGLAALVAGLVIL, FDVSGIVLLSGAMFCLVWGLI, GWGDLRTLGFLAAAVLAFAGF, VLMVLMAFSFIGGLFFVTFYL, VHLLPLTGMMIVGAPVSGIVI, FGPGGPLVVGMLLTAASLWGM, MGITSLWFVLLGLGLAPVMVG, QSAMQVGGSLGTAVLGVLMAS, and MGLAFTVAGAVALVAAAVALF.

This sequence belongs to the major facilitator superfamily. EmrB family.

It is found in the cell membrane. Its pathway is antibiotic biosynthesis; tetracenomycin C biosynthesis. Its function is as follows. Resistance to tetracenomycin C by an active tetracenomycin C efflux system which is probably energized by transmembrane electrochemical gradients. This is Tetracenomycin C resistance and export protein (tcmA) from Streptomyces glaucescens.